The primary structure comprises 1058 residues: MPKRTDIQKIMVIGSGPIIIGQAAEFDYAGTQACLSLKEEGYEVVLVNSNPATIMTDKEIADKVYIEPITLEFVTRILRKERPDALLPTLGGQTGLNMAMELSKNGILDELGVELLGTRLSAIDQAEDRDLFKQLMEELEQPIPESEIVNTVEEAIAFAATIGYPVIVRPAFTLGGTGGGMCANEKELREITENGLKLSPVTQCLIERSIAGFKEIEYEVMRDSADNALVVCNMENFDPVGIHTGDSIVFAPAQTMSDYENQMLRDASLSIIRALKIEGGCNVQLALDPNSFKYYVIEVNPRVSRSSALASKATGYPIAKLAAKIAVGLTLDEVINPVTGSTYAMFEPALDYVVAKIPRFPFDKFEKGERRLGTQMKATGEVMAIGRNIEESLLKACRSLEIGVHHNEIPELAAVSDDTLIEKVVKAQDDRLFYVSEAIRRGYTPEEIAELTKIDIFYLDKLLHIFEIEQELGAHPQDLEVLKIAKLNGFSDRKIAELWGTTDDQVRQLRLENKIVPVYKMVDTCAAEFDSETPYFYSTYGWENESIRSDKESVLVLGSGPIRIGQGVEFDYATVHSVKAIQAAGYEAIIMNSNPETVSTDFSVSDKLYFEPLTFEDVMNVIDLEQPKGVIVQFGGQTAINLAEPLAKAGVTILGTQVADLDRAEDRDLFEQALKELDIPQPPGQTATNEEEAALAARKIGFPVLVRPSYVLGGRAMEIVENEEDLRSYMRTAVKASPDHPVLVDSYIVGQECEVDAISDGKNVLIPGIMEHIERAGVHSGDSMAVYPPQTLSQKVQETIADYTKRLAIGLHCLGMMNIQFVIKDEKVYVIEVNPRASRTVPFLSKVTNIPMAQVATKLILGQSLSELGYQNGLYPESTRVHIKAPVFSFTKLAKVDSLLGPEMKSTGEVMGSDATLEKALYKAFEASYLHLPTFGNVVFTIADDAKEEALNLARRFQNIGYGILATEGTAAFFASHGLQAQPVGKIGDDDKDIPSFVRKGRIQAIINTVGTKRTADEDGEQIRRSAIEHGVPLFTALDTANAMLKVLESRSFVTEAI.

A carboxyphosphate synthetic domain region spans residues 1 to 401; that stretch reads MPKRTDIQKI…SLLKACRSLE (401 aa). ATP-binding residues include Arg129, Arg169, Gly175, Gly176, Arg208, Ile210, Glu215, Gly241, Ile242, His243, Gln284, and Glu298. An ATP-grasp 1 domain is found at 133–327; that stretch reads KQLMEELEQP…IAKLAAKIAV (195 aa). Gln284, Glu298, and Asn300 together coordinate Mg(2+). Positions 284, 298, and 300 each coordinate Mn(2+). Residues 402–546 form an oligomerization domain region; it reads IGVHHNEIPE…YSTYGWENES (145 aa). The carbamoyl phosphate synthetic domain stretch occupies residues 547–929; sequence IRSDKESVLV…ALYKAFEASY (383 aa). An ATP-grasp 2 domain is found at 671-861; that stretch reads EQALKELDIP…MAQVATKLIL (191 aa). ATP-binding residues include Arg707, Ser746, Ile748, Glu752, Gly777, Val778, His779, Ser780, Gln820, and Glu832. Positions 820, 832, and 834 each coordinate Mg(2+). Mn(2+) contacts are provided by Gln820, Glu832, and Asn834. Positions 930–1058 constitute an MGS-like domain; it reads LHLPTFGNVV…ESRSFVTEAI (129 aa). The interval 930–1058 is allosteric domain; it reads LHLPTFGNVV…ESRSFVTEAI (129 aa).

This sequence belongs to the CarB family. Composed of two chains; the small (or glutamine) chain promotes the hydrolysis of glutamine to ammonia, which is used by the large (or ammonia) chain to synthesize carbamoyl phosphate. Tetramer of heterodimers (alpha,beta)4. Mg(2+) is required as a cofactor. The cofactor is Mn(2+).

It carries out the reaction hydrogencarbonate + L-glutamine + 2 ATP + H2O = carbamoyl phosphate + L-glutamate + 2 ADP + phosphate + 2 H(+). The catalysed reaction is hydrogencarbonate + NH4(+) + 2 ATP = carbamoyl phosphate + 2 ADP + phosphate + 2 H(+). Its pathway is amino-acid biosynthesis; L-arginine biosynthesis; carbamoyl phosphate from bicarbonate: step 1/1. It participates in pyrimidine metabolism; UMP biosynthesis via de novo pathway; (S)-dihydroorotate from bicarbonate: step 1/3. Large subunit of the glutamine-dependent carbamoyl phosphate synthetase (CPSase). CPSase catalyzes the formation of carbamoyl phosphate from the ammonia moiety of glutamine, carbonate, and phosphate donated by ATP, constituting the first step of 2 biosynthetic pathways, one leading to arginine and/or urea and the other to pyrimidine nucleotides. The large subunit (synthetase) binds the substrates ammonia (free or transferred from glutamine from the small subunit), hydrogencarbonate and ATP and carries out an ATP-coupled ligase reaction, activating hydrogencarbonate by forming carboxy phosphate which reacts with ammonia to form carbamoyl phosphate. The polypeptide is Carbamoyl phosphate synthase large chain (Streptococcus pneumoniae serotype 19F (strain G54)).